The primary structure comprises 163 residues: MEFHFDATFFAFVGLVLFLALVVYLKVPGMMARSLDDRADQIRNELAEAKRLREEAQHLLAEYQRKRKEAEAEAAHIVAAAEREAQMLTAEAKKKTEEFVANRTALSEQKIKQAEVEAMKAVRSAAVDLAIAAAETVLGKQADAKVQSELFGNAVGQVKTRLN.

The helical transmembrane segment at phenylalanine 5–leucine 25 threads the bilayer.

It belongs to the ATPase B chain family. F-type ATPases have 2 components, F(1) - the catalytic core - and F(0) - the membrane proton channel. F(1) has five subunits: alpha(3), beta(3), gamma(1), delta(1), epsilon(1). F(0) has three main subunits: a(1), b(2) and c(10-14). The alpha and beta chains form an alternating ring which encloses part of the gamma chain. F(1) is attached to F(0) by a central stalk formed by the gamma and epsilon chains, while a peripheral stalk is formed by the delta and b chains.

It is found in the cell inner membrane. Functionally, f(1)F(0) ATP synthase produces ATP from ADP in the presence of a proton or sodium gradient. F-type ATPases consist of two structural domains, F(1) containing the extramembraneous catalytic core and F(0) containing the membrane proton channel, linked together by a central stalk and a peripheral stalk. During catalysis, ATP synthesis in the catalytic domain of F(1) is coupled via a rotary mechanism of the central stalk subunits to proton translocation. In terms of biological role, component of the F(0) channel, it forms part of the peripheral stalk, linking F(1) to F(0). This Rhizobium leguminosarum bv. trifolii (strain WSM2304) protein is ATP synthase subunit b 1.